Reading from the N-terminus, the 377-residue chain is Deoxyribonuclease CdiA-o11 (377 aa).

Positions 81 to 84 (VENN) match the VENN CT cleavage motif motif. Positions 85 to 233 (YLSTNQSLTF…ISFMSRNTAT (149 aa)) are inner membrane translocation domain (IMTD), targets to YciB. The tract at residues 88–377 (TNQSLTFDKE…GVKVTVTQVK (290 aa)) is CT domain, sufficient to interact with CdiI. A has DNase activity in vivo, cannot be expressed in the absence of CdiI region spans residues 222–377 (AAISFMSRNT…GVKVTVTQVK (156 aa)). Active-site residues include Glu257, Asp278, Ser289, and Lys291. Residues Glu257 and Asp278 each contribute to the Zn(2+) site.

Interacts with cognate immunity protein CdiI-o11-EC869, which blocks its toxic DNase activity. It depends on Zn(2+) as a cofactor.

It localises to the target cell. The protein localises to the target cell cytoplasm. Its function is as follows. Toxic component of a toxin-immunity protein module, which functions as a cellular contact-dependent growth inhibition (CDI) system. CDI modules allow bacteria to communicate with and inhibit the growth of closely related neighboring bacteria in a contact-dependent fashion. The C-terminal 289 residues (the CT fragment) has a strong DNase activity in the presence of Zn(2+), completely degrading supercoiled and linear plasmids, and inhibits growth. In the presence of Mg(2+) it nicks dsDNA. Toxic activity is neutralized by coexpression of the cognate immunity protein CdiI-o11-EC869, but not by non-cognate immunity proteins from other toxin-immunity modules or other strains of E.coli. Gains access to the cytoplasm of target cells by using integral inner membrane protein YciB. In terms of biological role, expression of this locus confers protection against other bacteria carrying the locus. The polypeptide is Deoxyribonuclease CdiA-o11 (cdiA4) (Escherichia coli O157:H7 (strain EC869)).